We begin with the raw amino-acid sequence, 427 residues long: MSAIVDIVGREILDSRGNPTVECDVLLESGTMGRAAVPSGASTGSREAIELRDGDKKRYLGKGVLKAVENINTEISESVLGLDASEQAFLDRTMIDLDGTDNKGRLGANATLAVSMAVARAAAEESGLPLYRYFGGMGGMQLPVPMMNVINGGAHANNSLDLQEFMIIPVGAPSFREAVRYGAEVFHALKKILGDRGISTAVGDEGGFAPSVESHEAAIQLILEAIDKAGFVAGEQIALGLDCAASEFYKDGNYVLSGENLTLSAGNWADMLATWVDKYPIISIEDGMHEGDWDGWKLLTERLGKRVQLVGDDLFVTNTKILQEGIDKGIANSILIKINQIGTLTETFAAIEMAKRAGYTAVISHRSGETEDSTIADIAVGTNAGQIKTGSLSRSDRIAKYNQLLRIEEDLGDIASYPGRGAFYNLK.

Position 163 (Q163) interacts with (2R)-2-phosphoglycerate. E205 acts as the Proton donor in catalysis. Mg(2+)-binding residues include D242, E285, and D312. Residues K337, R366, S367, and K388 each coordinate (2R)-2-phosphoglycerate. Catalysis depends on K337, which acts as the Proton acceptor.

This sequence belongs to the enolase family. Requires Mg(2+) as cofactor.

It is found in the cytoplasm. It localises to the secreted. The protein localises to the cell surface. It catalyses the reaction (2R)-2-phosphoglycerate = phosphoenolpyruvate + H2O. Its pathway is carbohydrate degradation; glycolysis; pyruvate from D-glyceraldehyde 3-phosphate: step 4/5. Catalyzes the reversible conversion of 2-phosphoglycerate (2-PG) into phosphoenolpyruvate (PEP). It is essential for the degradation of carbohydrates via glycolysis. This is Enolase from Variovorax paradoxus (strain S110).